Consider the following 1164-residue polypeptide: Receptor-like protein kinase BRI1-like 3 (1164 aa).

The N-terminal stretch at 1–23 is a signal peptide; the sequence is MKQQWQFLILCLLVLFLTVDSRG. Residues 24-772 lie on the Extracellular side of the membrane; sequence RRLLSDDVND…RSHAHPKKQS (749 aa). Asn32 carries N-linked (GlcNAc...) asparagine glycosylation. The short motif at 65–72 is the Cys pair 1 element; it reads CTWRGVSC. LRR repeat units lie at residues 77 to 98, 102 to 123, 125 to 146, 151 to 173, 176 to 197, 202 to 224, 227 to 248, 252 to 274, 278 to 300, 303 to 325, 327 to 347, 352 to 375, 376 to 397, 403 to 424, 427 to 448, 451 to 473, 476 to 498, 500 to 523, 524 to 546, and 548 to 570; these read RVIG…NNLT, NLRS…SSSG, SLEV…DYVF, NLVS…PSAS, RITT…TFIA, SLKH…SFGL, NLTV…VSLS, LLET…DYWG, NLRQ…LSLL, TLEV…FTSC, SLQS…STVV, RITN…TNCS, NLRV…GFCS, VLEK…ELGK, SLKT…EIWT, KLSD…ICVD, NLET…ISKC, NMLW…GKLE, KLAI…LGNC, and NLIW…LASQ. Residues Asn96 and Asn112 are each glycosylated (N-linked (GlcNAc...) asparagine). A glycan (N-linked (GlcNAc...) asparagine) is linked at Asn156. Asn212, Asn227, and Asn257 each carry an N-linked (GlcNAc...) asparagine glycan. 2 N-linked (GlcNAc...) asparagine glycosylation sites follow: Asn362 and Asn373. Residue Asn461 is glycosylated (N-linked (GlcNAc...) asparagine). N-linked (GlcNAc...) asparagine glycosylation is found at Asn532, Asn558, and Asn638. 4 LRR repeats span residues 640-662, 664-686, 688-711, and 712-734; these read SMIY…YGAM, YLQV…FGGL, AIGV…GGLS, and FLSD…GQLT. Asn722 and Asn743 each carry an N-linked (GlcNAc...) asparagine glycan. Positions 748 to 755 match the Cys pair 2 motif; the sequence is CGVPLPPC. Residues 773-793 traverse the membrane as a helical segment; that stretch reads IATGMSAGIVFSFMCIVMLIM. The Cytoplasmic portion of the chain corresponds to 794–1164; it reads ALYRARKVQK…LVEESRDKEP (371 aa). Phosphothreonine occurs at positions 847 and 855. Residues 858–1136 enclose the Protein kinase domain; sequence FSADSMIGSG…QVMTMFKELV (279 aa). ATP contacts are provided by residues 864-872 and Lys886; that span reads IGSGGFGDV. Position 931 is a phosphotyrosine (Tyr931). Asp985 functions as the Proton acceptor in the catalytic mechanism. Ser1020 bears the Phosphoserine mark. Tyr1028 carries the post-translational modification Phosphotyrosine.

It belongs to the protein kinase superfamily. Ser/Thr protein kinase family. Post-translationally, autophosphorylated on Tyr and Thr residues. In terms of tissue distribution, predominantly expressed in vascular tissues. Expressed only during postembryonic development with a very discrete pattern of expression, preferentially in the two protophloem cell files at the elongation zone of the root. The expression in these two cell files attenuates as the phloem cells differentiate in the upper root. In cotyledons and leaves, it is expressed in phloem cells, starting at the cotyledons and shoot apex, moving toward the basal part of the leaves, where the expression is weak. Expressed in the secondary and tertiary veins and in the upper part of the cotyledons and leaves. Weakly or not expressed in the inflorescence stems. Has some complementary expression with BRL1.

Its subcellular location is the cell membrane. It catalyses the reaction L-seryl-[protein] + ATP = O-phospho-L-seryl-[protein] + ADP + H(+). It carries out the reaction L-threonyl-[protein] + ATP = O-phospho-L-threonyl-[protein] + ADP + H(+). The catalysed reaction is L-tyrosyl-[protein] + ATP = O-phospho-L-tyrosyl-[protein] + ADP + H(+). Receptor with a dual specificity kinase activity acting on both serine/threonine- and tyrosine-containing substrates. Binds brassinolide. Regulates, in response to brassinosteroid binding, a signaling cascade involved in plant development. May be involved in cell growth and vascular differentiation. This chain is Receptor-like protein kinase BRI1-like 3 (BRL3), found in Arabidopsis thaliana (Mouse-ear cress).